The following is a 432-amino-acid chain: E3 ubiquitin-protein ligase ATL42 (432 aa).

Residues 1 to 18 (MYQIFFFFLPLLHSYASA) form the signal peptide. A helical transmembrane segment spans residues 37–57 (LAVVTGVLAIMFALTFVLLVY). The RING-type; atypical zinc-finger motif lies at 123 to 165 (CSVCLSKFESVEILRLLPKCRHAFHIGCIDQWLEQHATCPLCR).

It belongs to the RING-type zinc finger family. ATL subfamily.

It is found in the membrane. It carries out the reaction S-ubiquitinyl-[E2 ubiquitin-conjugating enzyme]-L-cysteine + [acceptor protein]-L-lysine = [E2 ubiquitin-conjugating enzyme]-L-cysteine + N(6)-ubiquitinyl-[acceptor protein]-L-lysine.. It functions in the pathway protein modification; protein ubiquitination. Its function is as follows. E3 ubiquitin-protein ligase able to catalyze polyubiquitination with ubiquitin-conjugating enzyme E2 UBC8 in vitro. The chain is E3 ubiquitin-protein ligase ATL42 (ATL42) from Arabidopsis thaliana (Mouse-ear cress).